Consider the following 442-residue polypeptide: tRNA modification GTPase MnmE (442 aa).

Residues arginine 27, glutamate 84, and lysine 124 each contribute to the (6S)-5-formyl-5,6,7,8-tetrahydrofolate site. Residues 221–366 (GLHVVIVGAP…LLDALQAFAE (146 aa)) enclose the TrmE-type G domain. Residues 231–236 (NAGKSS), 250–256 (SEEAGTT), and 275–278 (DTAG) each bind GTP. The Mg(2+) site is built by serine 235 and threonine 256. Lysine 442 serves as a coordination point for (6S)-5-formyl-5,6,7,8-tetrahydrofolate.

It belongs to the TRAFAC class TrmE-Era-EngA-EngB-Septin-like GTPase superfamily. TrmE GTPase family. Homodimer. Heterotetramer of two MnmE and two MnmG subunits. Requires K(+) as cofactor.

The protein resides in the cytoplasm. Functionally, exhibits a very high intrinsic GTPase hydrolysis rate. Involved in the addition of a carboxymethylaminomethyl (cmnm) group at the wobble position (U34) of certain tRNAs, forming tRNA-cmnm(5)s(2)U34. The polypeptide is tRNA modification GTPase MnmE (Brucella abortus (strain 2308)).